The primary structure comprises 132 residues: Ribosome-binding factor A (132 aa).

This sequence belongs to the RbfA family. As to quaternary structure, monomer. Binds 30S ribosomal subunits, but not 50S ribosomal subunits or 70S ribosomes.

The protein localises to the cytoplasm. In terms of biological role, one of several proteins that assist in the late maturation steps of the functional core of the 30S ribosomal subunit. Associates with free 30S ribosomal subunits (but not with 30S subunits that are part of 70S ribosomes or polysomes). Required for efficient processing of 16S rRNA. May interact with the 5'-terminal helix region of 16S rRNA. The polypeptide is Ribosome-binding factor A (Xanthomonas campestris pv. campestris (strain 8004)).